The primary structure comprises 270 residues: Orotidine 5'-phosphate decarboxylase (270 aa).

K89 functions as the Proton donor in the catalytic mechanism.

This sequence belongs to the OMP decarboxylase family. Type 2 subfamily.

The catalysed reaction is orotidine 5'-phosphate + H(+) = UMP + CO2. It functions in the pathway pyrimidine metabolism; UMP biosynthesis via de novo pathway; UMP from orotate: step 2/2. The chain is Orotidine 5'-phosphate decarboxylase from Dehalococcoides mccartyi (strain CBDB1).